Reading from the N-terminus, the 424-residue chain is Glycerol-3-phosphate dehydrogenase [NAD(+)] (424 aa).

NAD(+)-binding positions include 79–84, Phe-111, and Phe-167; that span reads GSGNWG. Residue Lys-190 participates in substrate binding. Residue Ala-223 coordinates NAD(+). Lys-283 acts as the Proton acceptor in catalysis. NAD(+)-binding residues include Arg-348 and Gln-377. 348-349 contacts substrate; the sequence is RN.

The protein belongs to the NAD-dependent glycerol-3-phosphate dehydrogenase family.

The enzyme catalyses sn-glycerol 3-phosphate + NAD(+) = dihydroxyacetone phosphate + NADH + H(+). In Eremothecium gossypii (strain ATCC 10895 / CBS 109.51 / FGSC 9923 / NRRL Y-1056) (Yeast), this protein is Glycerol-3-phosphate dehydrogenase [NAD(+)] (GPD).